Here is a 504-residue protein sequence, read N- to C-terminus: Xylose import ATP-binding protein XylG (504 aa).

2 consecutive ABC transporter domains span residues 6-243 and 262-504; these read LEMQ…VGRE and VRNF…TGGK. Residue 38-45 coordinates ATP; the sequence is GENGAGKS.

It belongs to the ABC transporter superfamily. Xylose importer (TC 3.A.1.2.4) family. In terms of assembly, the complex is composed of two ATP-binding proteins (XylG), two transmembrane proteins (XylH) and a solute-binding protein (XylF).

It localises to the cell membrane. It carries out the reaction D-xylose(out) + ATP + H2O = D-xylose(in) + ADP + phosphate + H(+). Functionally, part of the ABC transporter complex XylFGH involved in xylose import. Responsible for energy coupling to the transport system. The polypeptide is Xylose import ATP-binding protein XylG (Moorella thermoacetica (strain ATCC 39073 / JCM 9320)).